Consider the following 895-residue polypeptide: Protein translocase subunit SecA (895 aa).

ATP-binding positions include Gln89, 107–111 (GEGKT), and Asp502. Disordered regions lie at residues 560–579 (RRID…PGRT) and 848–884 (AAPA…CGSG). Positions 879, 881, 890, and 891 each coordinate Zn(2+).

It belongs to the SecA family. As to quaternary structure, monomer and homodimer. Part of the essential Sec protein translocation apparatus which comprises SecA, SecYEG and auxiliary proteins SecDF-YajC and YidC. Requires Zn(2+) as cofactor.

The protein localises to the cell inner membrane. Its subcellular location is the cytoplasm. The enzyme catalyses ATP + H2O + cellular proteinSide 1 = ADP + phosphate + cellular proteinSide 2.. In terms of biological role, part of the Sec protein translocase complex. Interacts with the SecYEG preprotein conducting channel. Has a central role in coupling the hydrolysis of ATP to the transfer of proteins into and across the cell membrane, serving both as a receptor for the preprotein-SecB complex and as an ATP-driven molecular motor driving the stepwise translocation of polypeptide chains across the membrane. This Ruegeria sp. (strain TM1040) (Silicibacter sp.) protein is Protein translocase subunit SecA.